The primary structure comprises 371 residues: Cytochrome b (371 aa).

A run of 4 helical transmembrane segments spans residues 25 to 45 (FGSM…FLAI), 69 to 90 (WIMQ…YIHI), 105 to 125 (WLSG…GYVL), and 170 to 190 (FFAL…IHIM). His75 and His89 together coordinate heme b. His174 and His188 together coordinate heme b. His193 serves as a coordination point for a ubiquinone. A run of 4 helical transmembrane segments spans residues 218–238 (HKDI…MSFS), 280–300 (LGGT…PFTH), 312–332 (IMQL…WAAT), and 339–358 (FTII…IMNP).

Belongs to the cytochrome b family. The cytochrome bc1 complex contains 3 respiratory subunits (MT-CYB, CYC1 and UQCRFS1), 2 core proteins (UQCRC1 and UQCRC2) and probably 6 low-molecular weight proteins. The cofactor is heme b.

The protein resides in the mitochondrion inner membrane. In terms of biological role, component of the ubiquinol-cytochrome c reductase complex (complex III or cytochrome b-c1 complex) that is part of the mitochondrial respiratory chain. The b-c1 complex mediates electron transfer from ubiquinol to cytochrome c. Contributes to the generation of a proton gradient across the mitochondrial membrane that is then used for ATP synthesis. The polypeptide is Cytochrome b (MT-CYB) (Coluber constrictor (Eastern racer)).